A 483-amino-acid polypeptide reads, in one-letter code: Septin-8 (483 aa).

Basic and acidic residues predominate over residues Met-1–Pro-16. Residues Met-1–Gly-22 form a disordered region. At Ala-2 the chain carries N-acetylalanine. At Ser-10 the chain carries Phosphoserine. The Septin-type G domain occupies Gln-41–Glu-307. The interval Gly-51–Ser-58 is G1 motif. Residues Gly-51–Ser-58, Gly-106, Lys-187–Glu-195, Gly-241, and Arg-256 each bind GTP. A G3 motif region spans residues Asp-103–Gly-106. The tract at residues Ala-186–Asp-189 is G4 motif. Positions Phe-320–Leu-413 form a coiled coil. The span at Gln-411 to Pro-420 shows a compositional bias: polar residues. The disordered stretch occupies residues Gln-411–Ser-443. The span at Leu-421–Ile-433 shows a compositional bias: basic and acidic residues.

It belongs to the TRAFAC class TrmE-Era-EngA-EngB-Septin-like GTPase superfamily. Septin GTPase family. As to quaternary structure, septins polymerize into heterooligomeric protein complexes that form filaments, and can associate with cellular membranes, actin filaments and microtubules. GTPase activity is required for filament formation. Interacts with CDK14. Interacts with SEPTIN5. Interacts with SEPTIN7. Interacts with SEPTIN4. Interacts with VAMP2; the interaction inhibits interaction of VAMP2 with SYP. Interacts with STX1A. Widely expressed, including in brain, heart and platelets; most abundant in aorta. Isoform 2 is expressed at low levels in specific brain areas, such as occipital pole, frontal lobe, temporal lobe and putamen. Isoform 1 and 3 are highly expressed in specific brain areas, such as occipital pole, frontal lobe, temporal lobe and putamen. Isoform 2 is highly expressed in prostate, testis and ovary. Isoform 1 and isoform 3 are expressed at low levels in prostate, testis and ovary.

It localises to the cytoplasm. It is found in the cytoskeleton. The protein localises to the synapse. Its subcellular location is the cell projection. The protein resides in the axon. It localises to the cytoplasmic vesicle. It is found in the secretory vesicle. The protein localises to the synaptic vesicle membrane. Its subcellular location is the presynapse. Functionally, filament-forming cytoskeletal GTPase. May play a role in platelet secretion. Seems to participate in the process of SNARE complex formation in synaptic vesicles. Its function is as follows. Stabilizes BACE1 protein levels and promotes the sorting and accumulation of BACE1 to the recycling or endosomal compartments, modulating the beta-amyloidogenic processing of APP. In Homo sapiens (Human), this protein is Septin-8.